A 307-amino-acid chain; its full sequence is Ribosomal RNA small subunit methyltransferase A (307 aa).

Residues Asn-35, Val-37, Gly-62, Glu-83, Asp-113, and Asn-136 each coordinate S-adenosyl-L-methionine.

This sequence belongs to the class I-like SAM-binding methyltransferase superfamily. rRNA adenine N(6)-methyltransferase family. RsmA subfamily.

It is found in the cytoplasm. It carries out the reaction adenosine(1518)/adenosine(1519) in 16S rRNA + 4 S-adenosyl-L-methionine = N(6)-dimethyladenosine(1518)/N(6)-dimethyladenosine(1519) in 16S rRNA + 4 S-adenosyl-L-homocysteine + 4 H(+). Specifically dimethylates two adjacent adenosines (A1518 and A1519) in the loop of a conserved hairpin near the 3'-end of 16S rRNA in the 30S particle. May play a critical role in biogenesis of 30S subunits. The chain is Ribosomal RNA small subunit methyltransferase A from Bifidobacterium longum subsp. infantis (strain ATCC 15697 / DSM 20088 / JCM 1222 / NCTC 11817 / S12).